Consider the following 258-residue polypeptide: 5'-nucleotidase SurE (258 aa).

The a divalent metal cation site is built by Asp18, Asp19, Ser49, and Asn102.

It belongs to the SurE nucleotidase family. A divalent metal cation serves as cofactor.

It localises to the cytoplasm. The catalysed reaction is a ribonucleoside 5'-phosphate + H2O = a ribonucleoside + phosphate. In terms of biological role, nucleotidase that shows phosphatase activity on nucleoside 5'-monophosphates. This Vibrio campbellii (strain ATCC BAA-1116) protein is 5'-nucleotidase SurE.